Here is a 121-residue protein sequence, read N- to C-terminus: Large ribosomal subunit protein bL12 (121 aa).

This sequence belongs to the bacterial ribosomal protein bL12 family. Homodimer. Part of the ribosomal stalk of the 50S ribosomal subunit. Forms a multimeric L10(L12)X complex, where L10 forms an elongated spine to which 2 to 4 L12 dimers bind in a sequential fashion. Binds GTP-bound translation factors.

In terms of biological role, forms part of the ribosomal stalk which helps the ribosome interact with GTP-bound translation factors. Is thus essential for accurate translation. The sequence is that of Large ribosomal subunit protein bL12 from Xanthomonas campestris pv. campestris (strain B100).